The sequence spans 503 residues: Aromatase (503 aa).

2 helical membrane passes run 19–39 and 303–323; these read EAMPAATMPVLLLTGLFLLVW and MLIAAPDTMSVSLFFMLFLIA. Positions 309 and 374 each coordinate substrate. Cysteine 437 is a binding site for heme.

Belongs to the cytochrome P450 family. Heme is required as a cofactor. Phosphorylated in vitro by PKA and PKG/PRKG1. These phosphorylations inhibit the catalytic activity as measured by estrone synthesis from androstenedione (36% decrease for PKA and 30% for PKG/PRKG1). Widely expressed, including in adult and fetal brain, placenta, skin fibroblasts, adipose tissue and gonads.

The protein resides in the endoplasmic reticulum membrane. It localises to the microsome membrane. It catalyses the reaction testosterone + 3 reduced [NADPH--hemoprotein reductase] + 3 O2 = 17beta-estradiol + formate + 3 oxidized [NADPH--hemoprotein reductase] + 4 H2O + 4 H(+). The catalysed reaction is androst-4-ene-3,17-dione + 3 reduced [NADPH--hemoprotein reductase] + 3 O2 = estrone + formate + 3 oxidized [NADPH--hemoprotein reductase] + 4 H2O + 4 H(+). The enzyme catalyses androst-4-ene-3,17-dione + reduced [NADPH--hemoprotein reductase] + O2 = 19-hydroxyandrost-4-ene-3,17-dione + oxidized [NADPH--hemoprotein reductase] + H2O + H(+). It carries out the reaction 19-hydroxyandrost-4-ene-3,17-dione + reduced [NADPH--hemoprotein reductase] + O2 = 19-oxo-androst-4-ene-3,17-dione + oxidized [NADPH--hemoprotein reductase] + 2 H2O + H(+). It catalyses the reaction 19-oxo-androst-4-ene-3,17-dione + reduced [NADPH--hemoprotein reductase] + O2 = estrone + formate + oxidized [NADPH--hemoprotein reductase] + H2O + 2 H(+). The catalysed reaction is estrone + reduced [NADPH--hemoprotein reductase] + O2 = 2-hydroxyestrone + oxidized [NADPH--hemoprotein reductase] + H2O + H(+). The enzyme catalyses 17beta-hydroxy-5alpha-androstan-3-one + reduced [NADPH--hemoprotein reductase] + O2 = 17beta,19-dihydroxy-3-oxo-5alpha-androstanone + oxidized [NADPH--hemoprotein reductase] + H2O + H(+). It carries out the reaction 17beta,19-dihydroxy-3-oxo-5alpha-androstanone + reduced [NADPH--hemoprotein reductase] + O2 = 17beta-hydroxy-3,19-dioxo-5alpha-androstanone + oxidized [NADPH--hemoprotein reductase] + 2 H2O + H(+). It catalyses the reaction 17beta-hydroxy-3,19-dioxo-5alpha-androstanone + reduced [NADPH--hemoprotein reductase] + O2 = 17beta-hydroxy-3-oxo-19-nor-5alpha-androst-1-ene + formate + oxidized [NADPH--hemoprotein reductase] + H2O + 2 H(+). The protein operates within steroid hormone biosynthesis. A cytochrome P450 monooxygenase that catalyzes the conversion of C19 androgens, androst-4-ene-3,17-dione (androstenedione) and testosterone to the C18 estrogens, estrone and estradiol, respectively. Catalyzes three successive oxidations of C19 androgens: two conventional oxidations at C19 yielding 19-hydroxy and 19-oxo/19-aldehyde derivatives, followed by a third oxidative aromatization step that involves C1-beta hydrogen abstraction combined with cleavage of the C10-C19 bond to yield a phenolic A ring and formic acid. Alternatively, the third oxidative reaction yields a 19-norsteroid and formic acid. Converts dihydrotestosterone to delta1,10-dehydro 19-nordihydrotestosterone and may play a role in homeostasis of this potent androgen. Also displays 2-hydroxylase activity toward estrone. Mechanistically, uses molecular oxygen inserting one oxygen atom into a substrate, and reducing the second into a water molecule, with two electrons provided by NADPH via cytochrome P450 reductase (CPR; NADPH-ferrihemoprotein reductase). This is Aromatase from Homo sapiens (Human).